The sequence spans 246 residues: Azurocidin (246 aa).

Residues 1 to 19 (MPALRFLALLASLLATSRV) form the signal peptide. The propeptide occupies 20–26 (GLATLAD). Residues 27-242 (IVGGRRAQPQ…FRNWIDSVLN (216 aa)) enclose the Peptidase S1 domain. Cysteine 52 and cysteine 68 are oxidised to a cystine. 2 N-linked (GlcNAc...) asparagine glycosylation sites follow: asparagine 139 and asparagine 170. 2 disulfides stabilise this stretch: cysteine 148–cysteine 205 and cysteine 178–cysteine 184. Positions 245–246 (PA) are excised as a propeptide.

This sequence belongs to the peptidase S1 family. Elastase subfamily.

The protein resides in the cytoplasmic granule membrane. This is a neutrophil granule-derived antibacterial and monocyte- and fibroblast-specific chemotactic glycoprotein. Binds heparin. The polypeptide is Azurocidin (Sus scrofa (Pig)).